The following is a 334-amino-acid chain: Malate dehydrogenase, cytoplasmic (334 aa).

Ser-2 is modified (N-acetylserine). NAD(+) contacts are provided by residues 11 to 17 (GAAGQIA) and Asp-42. Residues Arg-92 and Arg-98 each contribute to the substrate site. Residue Asn-105 participates in NAD(+) binding. At Lys-110 the chain carries N6-succinyllysine. NAD(+) is bound at residue Gln-112. N6-acetyllysine occurs at positions 118 and 121. 129-131 (VGN) is an NAD(+) binding site. Asn-131 and Arg-162 together coordinate substrate. His-187 serves as the catalytic Proton acceptor. Lys-214 bears the N6-succinyllysine mark. Position 217 is a phosphoserine (Ser-217). Arg-230 bears the Omega-N-methylarginine mark. Ser-241 carries the phosphoserine modification. Lys-298 bears the N6-acetyllysine; alternate mark. The residue at position 298 (Lys-298) is an N6-succinyllysine; alternate. At Ser-309 the chain carries Phosphoserine. An N6-succinyllysine modification is found at Lys-318. Ser-332 and Ser-333 each carry phosphoserine.

This sequence belongs to the LDH/MDH superfamily. MDH type 2 family. Homodimer. In terms of processing, ISGylated. Acetylation at Lys-118 dramatically enhances enzymatic activity and promotes adipogenic differentiation.

It localises to the cytoplasm. The protein localises to the cytosol. The catalysed reaction is (S)-malate + NAD(+) = oxaloacetate + NADH + H(+). The enzyme catalyses (2R)-2-hydroxy-3-(4-hydroxyphenyl)propanoate + NAD(+) = 3-(4-hydroxyphenyl)pyruvate + NADH + H(+). It carries out the reaction (S)-2-hydroxyglutarate + NAD(+) = 2-oxoglutarate + NADH + H(+). Functionally, catalyzes the reduction of aromatic alpha-keto acids in the presence of NADH. Plays essential roles in the malate-aspartate shuttle and the tricarboxylic acid cycle, important in mitochondrial NADH supply for oxidative phosphorylation. Catalyzes the reduction of 2-oxoglutarate to 2-hydroxyglutarate, leading to elevated reactive oxygen species (ROS). The protein is Malate dehydrogenase, cytoplasmic (Mdh1) of Rattus norvegicus (Rat).